A 665-amino-acid polypeptide reads, in one-letter code: MKDQYKVLYDPIKIGKLEIKNRYVLAPMGPGGMCNADGSFNKRGIEFYVERAKGGTGLIMTGVTMVENNIEKCALPSMPCPTINPLNFITTGNEMTERVHAYGAKIFLQLSAGFGRVSIPSIVGKVAVAPSKIPHRFLPGVTCRELTTEEVKEYVKAFGESAEIAKKAGFDGVEIHAVHEGYLLDQFAISFFNHRTDEYGGSLENRLRFACEVVQEIKKRCGQDFPVSLRYSIKSFIKDWCKGGLPDEEFEEKGRDIPEGIEAAKILVAAGYDALNGDVGSYDSWYWSHPPMYQKKGLYLPYNEILKKVVDVPIITAGRMEDPELSSDAILSGKTDMIALGRPLLADAEIPNKIFEDKYDKVRPCLSCQEGCMGRLQNFATVSCAVNPACGREKEYGLKKAEQIKKVLIVGGGVAGMEAARVAAIRGHKVTLIEKNGYLGGNIVPGGVPDFKDDDRALVKWYEGILKDLGVEIKLNVAASKENIKEFGADEVLLATGSSPRTLTIEGADKVYSAEDVLMERKNVGEKVIIIGGGLVGCETALWLKQQGKEVTIVEMQNDILQVGGPLCHANHDMLIDLIKFNKIDVKASSYISKKTDEGFVLNTNGEESIINADSAVVAIGYLSEKDLYSEVRFDIPNARLIGDANKVQNIMYAIWSAYEVAKNI.

Position 109 (Gln-109) interacts with FMN. Tyr-182 functions as the Proton donor in the catalytic mechanism. Residues Arg-230, Arg-319, and 341–342 (GR) contribute to the FMN site. [4Fe-4S] cluster-binding residues include Cys-365, Cys-368, Cys-372, and Cys-384. FAD contacts are provided by Ala-415, Glu-434, Asn-442, Lys-452, and Ala-479.

This sequence in the N-terminal section; belongs to the NADH:flavin oxidoreductase/NADH oxidase family. The cofactor is FMN. FAD serves as cofactor. Requires [4Fe-4S] cluster as cofactor.

The enzyme catalyses 3-phenylpropanoate + NAD(+) = (E)-cinnamate + NADH + H(+). It functions in the pathway amino-acid degradation; L-phenylalanine degradation. In terms of biological role, involved in the fermentation of L-phenylalanine via a Stickland reaction. Catalyzes the reduction of (E)-cinnamate to yield 3-phenylpropionate. This Clostridium sporogenes (strain ATCC 7955 / DSM 767 / NBRC 16411 / NCIMB 8053 / NCTC 8594 / PA 3679) protein is Cinnamate reductase.